Here is a 207-residue protein sequence, read N- to C-terminus: NAD(P)H dehydrogenase (quinone) (207 aa).

Residues 3-194 enclose the Flavodoxin-like domain; sequence VQIIFYSMYG…EMAKFQGRHV (192 aa). Residues 9–14 and 82–84 each bind FMN; these read SMYGHI and TRF. An NAD(+)-binding site is contributed by Tyr-11. Trp-102 contacts substrate. Residues 117–123 and His-138 each bind FMN; that span reads STATQHG.

The protein belongs to the WrbA family. Requires FMN as cofactor.

It catalyses the reaction a quinone + NADH + H(+) = a quinol + NAD(+). The enzyme catalyses a quinone + NADPH + H(+) = a quinol + NADP(+). This is NAD(P)H dehydrogenase (quinone) from Aromatoleum aromaticum (strain DSM 19018 / LMG 30748 / EbN1) (Azoarcus sp. (strain EbN1)).